The primary structure comprises 235 residues: Casparian strip membrane protein 2 (235 aa).

Positions 1 to 46 are disordered; sequence MSGSDTSGSVHVDEHGHGKASSSYDGAGAPAPAPAPFQGHRKAGSG. The Cytoplasmic segment spans residues 1 to 67; that stretch reads MSGSDTSGSV…GSGGDGLRRC (67 aa). A helical membrane pass occupies residues 68-88; the sequence is LGLIDFVLRVAAFGPTLAAAI. Topologically, residues 89–115 are extracellular; sequence SIGTSDERLSVFTNYFQFRARFDDFPA. A helical membrane pass occupies residues 116–136; that stretch reads FEFFIVANAIAAGYMVLSLPF. Over 137–150 the chain is Cytoplasmic; that stretch reads SAATIMSSKATGVK. A helical transmembrane segment spans residues 151-171; it reads LLLLICDTIMVGLLTAAASAA. Over 172–203 the chain is Extracellular; that stretch reads AAMVYVAHEGNLRANWVPICLQFHGFCQRTSG. The chain crosses the membrane as a helical span at residues 204–224; it reads AVIASFLAVFVLMVLIVMAAF. The Cytoplasmic portion of the chain corresponds to 225 to 235; it reads TMPRRTHHTAS.

Belongs to the Casparian strip membrane proteins (CASP) family. Homodimer and heterodimers.

It localises to the cell membrane. Its function is as follows. Regulates membrane-cell wall junctions and localized cell wall deposition. Required for establishment of the Casparian strip membrane domain (CSD) and the subsequent formation of Casparian strips, a cell wall modification of the root endodermis that determines an apoplastic barrier between the intraorganismal apoplasm and the extraorganismal apoplasm and prevents lateral diffusion. In Oryza sativa subsp. indica (Rice), this protein is Casparian strip membrane protein 2.